We begin with the raw amino-acid sequence, 209 residues long: ATP-dependent Clp protease proteolytic subunit (209 aa).

The Nucleophile role is filled by serine 107. The active site involves histidine 132.

It belongs to the peptidase S14 family. In terms of assembly, fourteen ClpP subunits assemble into 2 heptameric rings which stack back to back to give a disk-like structure with a central cavity, resembling the structure of eukaryotic proteasomes.

It localises to the cytoplasm. The enzyme catalyses Hydrolysis of proteins to small peptides in the presence of ATP and magnesium. alpha-casein is the usual test substrate. In the absence of ATP, only oligopeptides shorter than five residues are hydrolyzed (such as succinyl-Leu-Tyr-|-NHMec, and Leu-Tyr-Leu-|-Tyr-Trp, in which cleavage of the -Tyr-|-Leu- and -Tyr-|-Trp bonds also occurs).. Cleaves peptides in various proteins in a process that requires ATP hydrolysis. Has a chymotrypsin-like activity. Plays a major role in the degradation of misfolded proteins. The sequence is that of ATP-dependent Clp protease proteolytic subunit from Methylobacterium nodulans (strain LMG 21967 / CNCM I-2342 / ORS 2060).